A 339-amino-acid polypeptide reads, in one-letter code: Glucokinase (339 aa).

Gly16–Thr21 is an ATP binding site.

The protein belongs to the bacterial glucokinase family.

The protein localises to the cytoplasm. It carries out the reaction D-glucose + ATP = D-glucose 6-phosphate + ADP + H(+). The chain is Glucokinase from Sinorhizobium fredii (strain NBRC 101917 / NGR234).